The sequence spans 514 residues: Carboxysome shell carbonic anhydrase (514 aa).

Residues 1-27 (MAYRNRNLASQTQRPLAPTAPRRRPVV) form a disordered region. C175 is a Zn(2+) binding site. Residue D177 is the Proton acceptor of the active site. Zn(2+) contacts are provided by H243 and C254.

The protein belongs to the beta-class carbonic anhydrase family. CsoSCA subfamily. Homodimer. Zn(2+) is required as a cofactor.

The protein localises to the carboxysome. It catalyses the reaction hydrogencarbonate + H(+) = CO2 + H2O. Its function is as follows. Reversible hydration of carbon dioxide. Essential for photosynthetic carbon dioxide fixation, supplies CO(2) to RuBisCO (ribulose bisphosphate carboxylase, cbbL-cbbS) in the carboxysome. The sequence is that of Carboxysome shell carbonic anhydrase from Prochlorococcus marinus (strain MIT 9313).